The sequence spans 183 residues: Acireductone dioxygenase (183 aa).

4 residues coordinate Fe(2+): His99, His101, Glu105, and His144. 4 residues coordinate Ni(2+): His99, His101, Glu105, and His144.

Belongs to the acireductone dioxygenase (ARD) family. In terms of assembly, monomer. Fe(2+) serves as cofactor. It depends on Ni(2+) as a cofactor.

The enzyme catalyses 1,2-dihydroxy-5-(methylsulfanyl)pent-1-en-3-one + O2 = 3-(methylsulfanyl)propanoate + CO + formate + 2 H(+). It carries out the reaction 1,2-dihydroxy-5-(methylsulfanyl)pent-1-en-3-one + O2 = 4-methylsulfanyl-2-oxobutanoate + formate + 2 H(+). The protein operates within amino-acid biosynthesis; L-methionine biosynthesis via salvage pathway; L-methionine from S-methyl-5-thio-alpha-D-ribose 1-phosphate: step 5/6. Its function is as follows. Catalyzes 2 different reactions between oxygen and the acireductone 1,2-dihydroxy-3-keto-5-methylthiopentene (DHK-MTPene) depending upon the metal bound in the active site. Fe-containing acireductone dioxygenase (Fe-ARD) produces formate and 2-keto-4-methylthiobutyrate (KMTB), the alpha-ketoacid precursor of methionine in the methionine recycle pathway. Ni-containing acireductone dioxygenase (Ni-ARD) produces methylthiopropionate, carbon monoxide and formate, and does not lie on the methionine recycle pathway. In Microcystis aeruginosa, this protein is Acireductone dioxygenase.